The following is a 348-amino-acid chain: NADH-quinone oxidoreductase subunit H (348 aa).

Transmembrane regions (helical) follow at residues 21 to 41, 87 to 107, 120 to 140, 166 to 186, 195 to 215, 258 to 278, 288 to 308, and 325 to 345; these read IAGILLIALPVMLAVAMVIYV, GIFLLAPIVTFVVALVAWAVI, VGLLYVLAISSLGVYGIVMAG, IGFILICVVLWAGTFNLSEIV, GIVNGYFFNILLFPMWVLFFI, NILLLCSLNTVLFFGGWLPPI, GFLWFLIKTFLFFFMFSWIWA, and VFLPMSLLFVFLISGYLMATG.

Belongs to the complex I subunit 1 family. NDH-1 is composed of 14 different subunits. Subunits NuoA, H, J, K, L, M, N constitute the membrane sector of the complex.

The protein localises to the cell inner membrane. It catalyses the reaction a quinone + NADH + 5 H(+)(in) = a quinol + NAD(+) + 4 H(+)(out). Functionally, NDH-1 shuttles electrons from NADH, via FMN and iron-sulfur (Fe-S) centers, to quinones in the respiratory chain. The immediate electron acceptor for the enzyme in this species is believed to be ubiquinone. Couples the redox reaction to proton translocation (for every two electrons transferred, four hydrogen ions are translocated across the cytoplasmic membrane), and thus conserves the redox energy in a proton gradient. This subunit may bind ubiquinone. The protein is NADH-quinone oxidoreductase subunit H of Erythrobacter litoralis (strain HTCC2594).